Reading from the N-terminus, the 288-residue chain is MLDIDKIPADQPVLIAGPTASGKSELALRIAEHSGGVIVNADASQVYDCWRVVTARPSAEDESRAAHALYGHLSYDTLYSAGHWLRDVTPLLKGTKRPIIVGGTGLYFLTLTEGMADIPATPPEVRAEADTLSLETLAADLDPETRARIDMQNRARVQRAWEVLRATGRPLAEWQDDTPPPLLPAKDCTALVVEAERDWLETRIRRRFSMMIAQGALEEARAMQDRYDPALPSCKAIGVPELMAHLSGALTLEQAEERASVATRQYAKRQRTWFRARMKSWQRVSPQA.

Position 17 to 24 (G17 to S24) interacts with ATP. T19–S24 provides a ligand contact to substrate.

The protein belongs to the IPP transferase family. As to quaternary structure, monomer. Mg(2+) is required as a cofactor.

It carries out the reaction adenosine(37) in tRNA + dimethylallyl diphosphate = N(6)-dimethylallyladenosine(37) in tRNA + diphosphate. Its function is as follows. Catalyzes the transfer of a dimethylallyl group onto the adenine at position 37 in tRNAs that read codons beginning with uridine, leading to the formation of N6-(dimethylallyl)adenosine (i(6)A). This chain is tRNA dimethylallyltransferase, found in Ruegeria sp. (strain TM1040) (Silicibacter sp.).